Here is a 349-residue protein sequence, read N- to C-terminus: 5,10-methylenetetrahydromethanopterin reductase (349 aa).

The protein belongs to the mer family. Homotetramer composed of two loosely associated dimers.

The protein resides in the cytoplasm. The enzyme catalyses 5-methyl-5,6,7,8-tetrahydromethanopterin + oxidized coenzyme F420-(gamma-L-Glu)(n) + H(+) = 5,10-methylenetetrahydromethanopterin + reduced coenzyme F420-(gamma-L-Glu)(n). Its pathway is one-carbon metabolism; methanogenesis from CO(2); methyl-coenzyme M from 5,10-methylene-5,6,7,8-tetrahydromethanopterin: step 1/2. With respect to regulation, requires the presence of relatively high concentrations of either sulfate or phosphate for maximal activity. Catalyzes the reversible reduction of methylene-H(4)MPT to methyl-H(4)MPT. The polypeptide is 5,10-methylenetetrahydromethanopterin reductase (Methanopyrus kandleri (strain AV19 / DSM 6324 / JCM 9639 / NBRC 100938)).